We begin with the raw amino-acid sequence, 45 residues long: Large ribosomal subunit protein bL34 (45 aa).

Residues 1–10 (MTKRTLEGTN) show a composition bias toward basic and acidic residues. The disordered stretch occupies residues 1–27 (MTKRTLEGTNRKRKRTSGFRARMRSAT). The segment covering 11 to 23 (RKRKRTSGFRARM) has biased composition (basic residues).

The protein belongs to the bacterial ribosomal protein bL34 family.

The polypeptide is Large ribosomal subunit protein bL34 (Synechococcus elongatus (strain ATCC 33912 / PCC 7942 / FACHB-805) (Anacystis nidulans R2)).